Reading from the N-terminus, the 545-residue chain is GMP synthase [glutamine-hydrolyzing] (545 aa).

A Glutamine amidotransferase type-1 domain is found at 17-211 (TVLVLDMGSQ…ATKICGARPD (195 aa)). Residue cysteine 93 is the Nucleophile of the active site. Active-site residues include histidine 185 and glutamate 187. The GMPS ATP-PPase domain maps to 212–420 (WKMDDFSARE…LGIHEELIGR (209 aa)). ATP is bound at residue 240 to 246 (SGGVDST). Residues arginine 313, aspartate 482, lysine 537, and glutamate 543 each coordinate XMP.

Homodimer. Mg(2+) is required as a cofactor.

The protein resides in the cytoplasm. It is found in the cytosol. It catalyses the reaction XMP + L-glutamine + ATP + H2O = GMP + L-glutamate + AMP + diphosphate + 2 H(+). The protein operates within purine metabolism; GMP biosynthesis; GMP from XMP (L-Gln route): step 1/1. In terms of biological role, catalyzes the conversion of xanthine monophosphate (XMP) to GMP in the presence of glutamine and ATP through an adenyl-XMP intermediate. The chain is GMP synthase [glutamine-hydrolyzing] (GUA1) from Gibberella zeae (strain ATCC MYA-4620 / CBS 123657 / FGSC 9075 / NRRL 31084 / PH-1) (Wheat head blight fungus).